Here is a 243-residue protein sequence, read N- to C-terminus: Venom nerve growth factor 1 (243 aa).

The first 18 residues, 1-18 (MSMLCYTLIIAFLIGIWA), serve as a signal peptide directing secretion. Positions 19–125 (APKSEDNVPL…TLNRNIRAKR (107 aa)) are excised as a propeptide. The span at 47 to 66 (GLKTSRNTDQRHPAPKKAED) shows a compositional bias: basic and acidic residues. Residues 47 to 69 (GLKTSRNTDQRHPAPKKAEDQEL) form a disordered region. Intrachain disulfides connect cysteine 139-cysteine 204, cysteine 182-cysteine 232, and cysteine 192-cysteine 234. N-linked (GlcNAc...) asparagine glycosylation occurs at asparagine 148.

The protein belongs to the NGF-beta family. As to quaternary structure, homodimer; non-covalently linked. In terms of tissue distribution, expressed by the venom gland.

It is found in the secreted. In terms of biological role, nerve growth factor is important for the development and maintenance of the sympathetic and sensory nervous systems. It stimulates division and differentiation of sympathetic and embryonic sensory neurons as well as basal forebrain cholinergic neurons in the brain. Its relevance in the snake venom is not clear. However, it has been shown to inhibit metalloproteinase-dependent proteolysis of platelet glycoprotein Ib alpha, suggesting a metalloproteinase inhibition to prevent metalloprotease autodigestion and/or protection against prey proteases. Binds a lipid between the two protein chains in the homodimer. The lipid-bound form promotes histamine relase from mouse mast cells, contrary to the lipid-free form. The polypeptide is Venom nerve growth factor 1 (Oxyuranus microlepidotus (Inland taipan)).